The chain runs to 620 residues: Ion-translocating oxidoreductase complex subunit C (620 aa).

2 4Fe-4S ferredoxin-type domains span residues Thr366 to Tyr397 and Lys407 to Tyr436. 8 residues coordinate [4Fe-4S] cluster: Cys377, Cys380, Cys383, Cys387, Cys416, Cys419, Cys422, and Cys426.

It belongs to the 4Fe4S bacterial-type ferredoxin family. RnfC subfamily. In terms of assembly, the complex is composed of six subunits: RnfA, RnfB, RnfC, RnfD, RnfE and RnfG. It depends on [4Fe-4S] cluster as a cofactor.

It localises to the cell inner membrane. Its function is as follows. Part of a membrane-bound complex that couples electron transfer with translocation of ions across the membrane. This chain is Ion-translocating oxidoreductase complex subunit C, found in Yersinia pestis bv. Antiqua (strain Antiqua).